Reading from the N-terminus, the 697-residue chain is Potassium channel KAT2 (697 aa).

Residues 1-63 lie on the Cytoplasmic side of the membrane; sequence MSISCTRNFF…PFDPRFRGWE (63 aa). Residues 64–84 form a helical membrane-spanning segment; it reads MWLVILVIYSAWICPFEFAFI. At 85-91 the chain is on the extracellular side; sequence TYKKDAL. Residues 92–112 form a helical membrane-spanning segment; sequence FIIDNIVNGFFAIDIILTFFV. Topologically, residues 113-134 are cytoplasmic; it reads AYLDSHSYLLVDKPKKIAIRYL. Residues 135–155 form a helical membrane-spanning segment; sequence STWFAFDVCSTAPFQSLSLLF. At 156–165 the chain is on the extracellular side; it reads KYNGSEIGFR. Asn158 carries an N-linked (GlcNAc...) asparagine glycan. Residues 166 to 186 form a helical; Voltage-sensor membrane-spanning segment; it reads VLSMLRLWRLRRVSSLFARLE. Topologically, residues 187 to 200 are cytoplasmic; sequence KDIRFNYFWTRCTK. The chain crosses the membrane as a helical span at residues 201–221; that stretch reads LISVTLFAVHCAGCFAYLIAD. Over 222–248 the chain is Extracellular; that stretch reads QYHDPTKTWIGAVYPNFKETSVWSRYV. Residues 249–268 constitute an intramembrane region (pore-forming); sequence TALYWSITTLTTTGYGDLHA. Over 269 to 272 the chain is Extracellular; it reads ENPR. The helical transmembrane segment at 273 to 293 threads the bilayer; it reads EMLFFVFFMLFNLGFTSYLIG. Residues 294–697 lie on the Cytoplasmic side of the membrane; that stretch reads NMTNLVVHWT…HLYILINENS (404 aa). 377–496 contacts a nucleoside 3',5'-cyclic phosphate; the sequence is LFHGVSRNFL…RVIMNNLFMK (120 aa). In terms of domain architecture, KHA spans 629 to 697; that stretch reads RVTIHLKSRD…HLYILINENS (69 aa).

This sequence belongs to the potassium channel family. Plant (TC 1.A.1.4) subfamily. The potassium channel is probably composed of a homo- or heterotetrameric complex of pore-forming subunits. May interact with KAT1. Interacts with SLAC1. In terms of tissue distribution, expressed in guard cells of hypocotyls, stems leaves and petioles. Detected also in the phloem of minor veins and in flower at a lower level.

The protein resides in the membrane. In terms of biological role, highly selective inward-rectifying potassium channel. This voltage-dependent channel could mediate long-term potassium influx into guard cells leading to stomatal opening. Assuming opened or closed conformations in response to the voltage difference across the membrane, the channel is activated by hyperpolarization. The channel activity is enhanced upon external acidification. The chain is Potassium channel KAT2 (KAT2) from Arabidopsis thaliana (Mouse-ear cress).